Reading from the N-terminus, the 276-residue chain is E3 ubiquitin-protein ligase CCNB1IP1 (276 aa).

Residues cysteine 10–asparagine 52 form an RING-type; atypical zinc finger. Residues methionine 146–arginine 182 are a coiled coil.

Interacts with CCNB1, UBE2L3 and NF2. In terms of processing, ubiquitinated; autoubiquitinated. Phosphorylated by CDK1 on serine or threonine residues (in vitro). As to expression, expressed predominantly in the testes and 17 day embryos (corresponding to prophase I in females). Weakly or not expressed in other tissues.

The protein resides in the nucleus. The protein localises to the chromosome. It carries out the reaction S-ubiquitinyl-[E2 ubiquitin-conjugating enzyme]-L-cysteine + [acceptor protein]-L-lysine = [E2 ubiquitin-conjugating enzyme]-L-cysteine + N(6)-ubiquitinyl-[acceptor protein]-L-lysine.. The protein operates within protein modification; protein ubiquitination. Functionally, ubiquitin E3 ligase that acts as a limiting factor for crossing-over during meiosis: required during zygonema to limit the colocalization of RNF212 with MutS-gamma-associated recombination sites and thereby establish early differentiation of crossover and non-crossover sites. Later, it is directed by MutL-gamma to stably accumulate at designated crossover sites. Probably promotes the dissociation of RNF212 and MutS-gamma to allow the progression of recombination and the implementation of the final steps of crossing over. Modulates cyclin-B levels and participates in the regulation of cell cycle progression through the G2 phase. Overexpression causes delayed entry into mitosis. The sequence is that of E3 ubiquitin-protein ligase CCNB1IP1 (Ccnb1ip1) from Mus musculus (Mouse).